Reading from the N-terminus, the 476-residue chain is Thymidine phosphorylase (476 aa).

Pro residues predominate over residues 1 to 11; the sequence is MAAPGTPPPLA. The segment at 1-26 is disordered; that stretch reads MAAPGTPPPLAPETAGADSGGGSGEH. Phosphothreonine occurs at positions 6 and 475.

This sequence belongs to the thymidine/pyrimidine-nucleoside phosphorylase family. As to quaternary structure, homodimer.

It catalyses the reaction thymidine + phosphate = 2-deoxy-alpha-D-ribose 1-phosphate + thymine. The protein operates within pyrimidine metabolism; dTMP biosynthesis via salvage pathway; dTMP from thymine: step 1/2. Its function is as follows. Catalyzes the reversible phosphorolysis of thymidine. The produced molecules are then utilized as carbon and energy sources or in the rescue of pyrimidine bases for nucleotide synthesis. The protein is Thymidine phosphorylase (Tymp) of Rattus norvegicus (Rat).